Consider the following 332-residue polypeptide: Thiamine thiazole synthase (332 aa).

Substrate contacts are provided by residues Cys87, 108-109, Gly116, and Val184; that span reads EA. Cys221 carries the 2,3-didehydroalanine (Cys) modification. Substrate-binding positions include Asp223, His238, Met290, and 300–302; that span reads RMG.

The protein belongs to the THI4 family. Homooctamer. Requires Fe cation as cofactor. During the catalytic reaction, a sulfide is transferred from Cys-221 to a reaction intermediate, generating a dehydroalanine residue.

It is found in the cytoplasm. It localises to the nucleus. It catalyses the reaction [ADP-thiazole synthase]-L-cysteine + glycine + NAD(+) = [ADP-thiazole synthase]-dehydroalanine + ADP-5-ethyl-4-methylthiazole-2-carboxylate + nicotinamide + 3 H2O + 2 H(+). Functionally, involved in biosynthesis of the thiamine precursor thiazole. Catalyzes the conversion of NAD and glycine to adenosine diphosphate 5-(2-hydroxyethyl)-4-methylthiazole-2-carboxylic acid (ADT), an adenylated thiazole intermediate. The reaction includes an iron-dependent sulfide transfer from a conserved cysteine residue of the protein to a thiazole intermediate. The enzyme can only undergo a single turnover, which suggests it is a suicide enzyme. May have additional roles in adaptation to various stress conditions and in DNA damage tolerance. This Aspergillus fumigatus (strain ATCC MYA-4609 / CBS 101355 / FGSC A1100 / Af293) (Neosartorya fumigata) protein is Thiamine thiazole synthase.